A 673-amino-acid chain; its full sequence is UvrABC system protein B (673 aa).

The Helicase ATP-binding domain occupies 26–415; sequence EGLEDGLAHQ…GDVVDQVVRP (390 aa). 39-46 provides a ligand contact to ATP; the sequence is GVTGSGKT. Positions 92 to 115 match the Beta-hairpin motif; it reads YYDYYQPEAYVPSSDTFIEKDASV. Positions 431 to 597 constitute a Helicase C-terminal domain; that stretch reads QVDDLLSEIR…GLNKKVVDIL (167 aa). Positions 608–627 are disordered; the sequence is AKGRGKSRPIVEPDNVPMDM. The UVR domain maps to 633 to 668; that stretch reads QQKIHELEGLMMQHAQNLEFEEAAQIRDQLHQLREL.

It belongs to the UvrB family. As to quaternary structure, forms a heterotetramer with UvrA during the search for lesions. Interacts with UvrC in an incision complex.

Its subcellular location is the cytoplasm. Its function is as follows. The UvrABC repair system catalyzes the recognition and processing of DNA lesions. A damage recognition complex composed of 2 UvrA and 2 UvrB subunits scans DNA for abnormalities. Upon binding of the UvrA(2)B(2) complex to a putative damaged site, the DNA wraps around one UvrB monomer. DNA wrap is dependent on ATP binding by UvrB and probably causes local melting of the DNA helix, facilitating insertion of UvrB beta-hairpin between the DNA strands. Then UvrB probes one DNA strand for the presence of a lesion. If a lesion is found the UvrA subunits dissociate and the UvrB-DNA preincision complex is formed. This complex is subsequently bound by UvrC and the second UvrB is released. If no lesion is found, the DNA wraps around the other UvrB subunit that will check the other stand for damage. This Escherichia coli O6:H1 (strain CFT073 / ATCC 700928 / UPEC) protein is UvrABC system protein B.